The chain runs to 578 residues: PX domain-containing protein kinase-like protein (578 aa).

Positions 14 to 126 constitute a PX domain; the sequence is LDDTVPLTAA…KFLDPNNYSA (113 aa). The Protein kinase domain occupies 88–481; that stretch reads FIAERQKGLQ…LENSEEHSAK (394 aa). 2 stretches are compositionally biased toward basic residues: residues 437-448 and 457-469; these read IHQHRRLTRAQS and KKRK…KSKR. 2 disordered regions span residues 437–548 and 559–578; these read IHQH…NGMS and FQKG…PKIG. Residues 483–513 show a composition bias toward low complexity; it reads SNSNNSAGSGASSPLTSPSSPTPPSTSGISA. Pro residues predominate over residues 514-530; that stretch reads LPPPPPPPPPPAAPLPP. The region spanning 548–567 is the WH2 domain; it reads SRGALLSSIQNFQKGTLRKA. Basic and acidic residues predominate over residues 568–578; sequence KTCDHSAPKIG.

Belongs to the protein kinase superfamily. In terms of tissue distribution, widely expressed in all tissues examined except in heart. Isoform 1 is expressed in high levels in the brain, skeletal muscle, spleen and testis. Isoform 7 expression has yet to be demonstrated.

Its subcellular location is the cytoplasm. The protein localises to the cell membrane. Binds to and modulates brain Na,K-ATPase subunits ATP1B1 and ATP1B3 and may thereby participate in the regulation of electrical excitability and synaptic transmission. May not display kinase activity. The protein is PX domain-containing protein kinase-like protein of Homo sapiens (Human).